Consider the following 393-residue polypeptide: MTKRKQQDTKENLTLTVFESNKRCSNSGGEYFDRIPADLVIKILSKLSAKSMAKCRCVCKLLSSIIRQPNYNQLFPIKYPDPPRFIFTFLGGGMLFSYTSTQPENPDENSSLVATAHHHTDIPRDFSQILSSVHGLVCYHRKIKNDTVFVIYNPITGQYVTLPILEAHATINYFAIGYDPINKRFKVLCVTSVHHGTGEEFDSQHQVLTFETGRRNLFWRKIQCRRHYYTHRYHKGICIKGVLYYAATSMKPMLGPMIVCFDVRSEKFGFITWKPPSLINYKGKLGSINSNDNDLVLWVLEHGQERKWSKHIYVKPLQWPEFNGIDVNFLVTSKGEAVFCPNHYDPQVPFYLYYYNLEENIVVRVRVEVPESQGSKRVLFHAVPNYLENMKLT.

The F-box domain occupies 29 to 74 (GEYFDRIPADLVIKILSKLSAKSMAKCRCVCKLLSSIIRQPNYNQL).

The chain is Putative F-box protein At1g55070 from Arabidopsis thaliana (Mouse-ear cress).